A 354-amino-acid polypeptide reads, in one-letter code: tRNA dimethylallyltransferase (354 aa).

28–35 serves as a coordination point for ATP; the sequence is GPTATGKS. Substrate is bound at residue 30–35; that stretch reads TATGKS. The tract at residues 53–56 is interaction with substrate tRNA; that stretch reads DSRQ.

Belongs to the IPP transferase family. As to quaternary structure, monomer. Requires Mg(2+) as cofactor.

It carries out the reaction adenosine(37) in tRNA + dimethylallyl diphosphate = N(6)-dimethylallyladenosine(37) in tRNA + diphosphate. Catalyzes the transfer of a dimethylallyl group onto the adenine at position 37 in tRNAs that read codons beginning with uridine, leading to the formation of N6-(dimethylallyl)adenosine (i(6)A). The chain is tRNA dimethylallyltransferase from Synechococcus sp. (strain JA-2-3B'a(2-13)) (Cyanobacteria bacterium Yellowstone B-Prime).